Consider the following 182-residue polypeptide: ATP synthase subunit delta (182 aa).

It belongs to the ATPase delta chain family. F-type ATPases have 2 components, F(1) - the catalytic core - and F(0) - the membrane proton channel. F(1) has five subunits: alpha(3), beta(3), gamma(1), delta(1), epsilon(1). F(0) has three main subunits: a(1), b(2) and c(10-14). The alpha and beta chains form an alternating ring which encloses part of the gamma chain. F(1) is attached to F(0) by a central stalk formed by the gamma and epsilon chains, while a peripheral stalk is formed by the delta and b chains.

The protein resides in the cell inner membrane. In terms of biological role, f(1)F(0) ATP synthase produces ATP from ADP in the presence of a proton or sodium gradient. F-type ATPases consist of two structural domains, F(1) containing the extramembraneous catalytic core and F(0) containing the membrane proton channel, linked together by a central stalk and a peripheral stalk. During catalysis, ATP synthesis in the catalytic domain of F(1) is coupled via a rotary mechanism of the central stalk subunits to proton translocation. Its function is as follows. This protein is part of the stalk that links CF(0) to CF(1). It either transmits conformational changes from CF(0) to CF(1) or is implicated in proton conduction. The sequence is that of ATP synthase subunit delta from Pseudothermotoga lettingae (strain ATCC BAA-301 / DSM 14385 / NBRC 107922 / TMO) (Thermotoga lettingae).